The primary structure comprises 226 residues: Cobalt transport protein CbiM 2 (226 aa).

Helical transmembrane passes span G6–Y26, M43–V63, L75–F95, T107–F127, F135–T155, and V181–M201.

Belongs to the CbiM family. As to quaternary structure, forms an energy-coupling factor (ECF) transporter complex composed of an ATP-binding protein (A component, CbiO), a transmembrane protein (T component, CbiQ) and 2 possible substrate-capture proteins (S components, CbiM and CbiN) of unknown stoichimetry.

It is found in the cell inner membrane. It participates in cofactor biosynthesis; adenosylcobalamin biosynthesis. In terms of biological role, part of the energy-coupling factor (ECF) transporter complex CbiMNOQ involved in cobalt import. The protein is Cobalt transport protein CbiM 2 of Pelobacter propionicus (strain DSM 2379 / NBRC 103807 / OttBd1).